We begin with the raw amino-acid sequence, 128 residues long: uncharacterized protein (128 aa).

As to expression, high expression in pituitary gland and weak in pancreas.

This is an uncharacterized protein from Homo sapiens (Human).